The chain runs to 76 residues: uncharacterized protein (76 aa).

A helical membrane pass occupies residues 53–70 (STKLHIIWFCIFAIFIAV).

It is found in the membrane. This is an uncharacterized protein from Haemophilus influenzae (strain ATCC 51907 / DSM 11121 / KW20 / Rd).